A 395-amino-acid polypeptide reads, in one-letter code: Protein UNIFOLIATA (395 aa).

2 disordered regions span residues 147-170 (SQEG…GGGS) and 185-223 (QIRR…GERQ). The span at 202-211 (EEGEEEEEDN) shows a compositional bias: acidic residues. DNA-binding regions lie at residues 224-228 (REHPF), 293-300 (NKPKMRHY), and 364-367 (YGPT).

Belongs to the FLO/LFY family. As to expression, highly expressed in leaf, leaflet, inflorescence and lateral shoot primordia on the main shoot axis, and in floral organ and carpel primordia.

Its subcellular location is the nucleus. Its function is as follows. May regulate indeterminacy during leaf and flower development. This chain is Protein UNIFOLIATA (UNI), found in Pisum sativum (Garden pea).